A 147-amino-acid polypeptide reads, in one-letter code: 16 kDa heat shock protein B (147 aa).

Positions 29–141 (NEAGSTYPPY…APSAFRSAAA (113 aa)) constitute a sHSP domain.

It belongs to the small heat shock protein (HSP20) family.

This chain is 16 kDa heat shock protein B (ibpB), found in Azotobacter vinelandii.